The sequence spans 264 residues: uncharacterized protein (264 aa).

The stretch at 19–45 forms a coiled coil; that stretch reads AQEESMEQLKDINTKIDNSEKKISLEN.

This is an uncharacterized protein from Acanthamoeba polyphaga mimivirus (APMV).